The primary structure comprises 578 residues: Endonuclease GajA (578 aa).

The ATPase domain stretch occupies residues M1–K341. An ATP-binding site is contributed by D32–T36. A toprim domain region spans residues L370–I510. Residues E379, E383, D463, E464, and E513 each contribute to the a divalent metal cation site.

As to quaternary structure, homotetramer. Forms the core of the anti-phage defense complex. Interacts with GajB; 2 GajB dimers dock at opposite sides of the GajA complex to form a 4:4 GajA-GajB assembly (GajAB). GajAB interacts with Bacillus phage Phi3T Gad1 protein; this interaction forms a 4:4:8 GajAB-Gad1 complex and leads to GajAB inhibition. Mg(2+) serves as cofactor. The cofactor is Mn(2+).

Endonuclease activity inhibited by all NTPs, dNTPs, NDPs (at 0.5 mM, UDP not tested) and AMP-PNP; not inhibited by any tested NMP, dNMP or nucleoside. Inhibited by 100 mM NaCl, 100 mM KCl, 0.5 mM Co(2+) and 0.5 mM Ni(2+). Component of antiviral defense system Gabija type I, composed of GajA and GajB. Endonuclease that nicks double-stranded DNA within the sequence 5'-TNNNCGGGNNA-3' in the absence of nucleotides (NTP, dNTP and NDPs), cleaving after C-1. Has no detected ATPase activity. Expression of Gabija type I in B.subtilis (strain BEST7003) confers resistance to phages phi105, phi29, rho14, SpBeta and SBSphiC. Expression of Gabija type I in E.coli B (strain ATCC 11303) confers resistance to phage T7. It is thought that this enzyme is strongly suppressed during physiological growth (in E.coli total nucleotide concentration is over 8.7 mM in mid-log phase), but during viral replication, when nucleotides are rapidly consumed, it is de-suppressed and degrades target DNA. The sequence is that of Endonuclease GajA from Bacillus cereus (strain VD045).